We begin with the raw amino-acid sequence, 203 residues long: Outer-membrane lipoprotein carrier protein (203 aa).

The N-terminal stretch at 1–21 is a signal peptide; that stretch reads MKKIAITCALLSSLVASSVWA.

This sequence belongs to the LolA family. In terms of assembly, monomer.

Its subcellular location is the periplasm. Participates in the translocation of lipoproteins from the inner membrane to the outer membrane. Only forms a complex with a lipoprotein if the residue after the N-terminal Cys is not an aspartate (The Asp acts as a targeting signal to indicate that the lipoprotein should stay in the inner membrane). This is Outer-membrane lipoprotein carrier protein from Escherichia coli O139:H28 (strain E24377A / ETEC).